The chain runs to 426 residues: uncharacterized protein (426 aa).

Positions 1-23 are cleaved as a signal peptide; that stretch reads MKKFILFLIILLFSIYFLNVSSA.

This is an uncharacterized protein from Methanocaldococcus jannaschii (strain ATCC 43067 / DSM 2661 / JAL-1 / JCM 10045 / NBRC 100440) (Methanococcus jannaschii).